Reading from the N-terminus, the 564-residue chain is E3 ubiquitin-protein ligase TRIM16 (564 aa).

Positions 1–70 (MAELDLMAPG…DPAEQGDPAG (70 aa)) are disordered. The span at 24 to 39 (SPDSGSPSPDSGSASP) shows a compositional bias: low complexity. 2 consecutive B box-type zinc fingers follow at residues 72–122 (GKEV…LTEP) and 126–165 (HNWRYCPAHHSPLSAFCCPDQQCICQDCCQEHSGHTIVSL). Position 116 is a phosphoserine (S116). Zn(2+) is bound by residues C131, H134, C153, and H157. 3 coiled-coil regions span residues 165–203 (LDAARRDKEAELQCTQLDLERKLKLNENAISRLQANQKS), 243–274 (AALSQANGIKAHLEYRSAEMEKSKQELERMAA), and 320–340 (HLIQLLENYKKKLQEFSKEEE). Position 203 is a phosphoserine (S203). Residues 355–553 (YWTSKPEPST…RIVDLGEEPE (199 aa)) form the B30.2/SPRY domain.

Belongs to the TRIM/RBCC family. As to quaternary structure, homodimerizes via its coiled-coil domain. Heterodimerizes with MID1, TRIM24 and PML. Interacts with Galectin-3/LGALS3 in a ULK1-dependent manner; this interaction mediates autophagy of damage endomembranes. Interacts with BECN1. Interacts with ATG16L1. Interacts with p62/SQSTM and LC3B/MAP1LC3B. Post-translationally, phosphorylated by ULK1. Auto-ubiquitinates via its B-Boxes.

The protein localises to the cytoplasm. It catalyses the reaction S-ubiquitinyl-[E2 ubiquitin-conjugating enzyme]-L-cysteine + [acceptor protein]-L-lysine = [E2 ubiquitin-conjugating enzyme]-L-cysteine + N(6)-ubiquitinyl-[acceptor protein]-L-lysine.. E3 ubiquitin ligase that plays an essential role in the organization of autophagic response and ubiquitination upon lysosomal and phagosomal damages. Plays a role in the stress-induced biogenesis and degradation of protein aggresomes by regulating the p62-KEAP1-NRF2 signaling and particularly by modulating the ubiquitination levels and thus stability of NRF2. Acts as a scaffold protein and facilitates autophagic degradation of protein aggregates by interacting with p62/SQSTM, ATG16L1 and LC3B/MAP1LC3B. In turn, protects the cell against oxidative stress-induced cell death as a consequence of endomembrane damage. In Pongo abelii (Sumatran orangutan), this protein is E3 ubiquitin-protein ligase TRIM16 (TRIM16).